The following is a 382-amino-acid chain: G2/mitotic-specific cyclin-B2 (382 aa).

Residues 1 to 12 (MSSVEAVTQQQL) show a composition bias toward polar residues. The disordered stretch occupies residues 1 to 78 (MSSVEAVTQQ…HTSAGDPAPI (78 aa)). The segment covering 38–47 (NRNAAAAANR) has biased composition (low complexity).

It belongs to the cyclin family. Cyclin AB subfamily. In terms of assembly, interacts with the CDK1 protein kinase to form a serine/threonine kinase holoenzyme complex also known as maturation promoting factor (MPF). The cyclin subunit imparts substrate specificity to the complex.

Functionally, essential for the control of the cell cycle at the G2/M (mitosis) transition. This is G2/mitotic-specific cyclin-B2 (ccnb2) from Oryzias javanicus (Javanese ricefish).